The following is a 208-amino-acid chain: Large ribosomal subunit protein uL4 (208 aa).

The disordered stretch occupies residues 45 to 89 (RQGTHAHKNRSAVSGGGKKPWRQKGTGRARQGSTRSPQWRGGGTV).

This sequence belongs to the universal ribosomal protein uL4 family. Part of the 50S ribosomal subunit.

One of the primary rRNA binding proteins, this protein initially binds near the 5'-end of the 23S rRNA. It is important during the early stages of 50S assembly. It makes multiple contacts with different domains of the 23S rRNA in the assembled 50S subunit and ribosome. In terms of biological role, forms part of the polypeptide exit tunnel. In Lactococcus lactis subsp. cremoris (strain SK11), this protein is Large ribosomal subunit protein uL4.